A 367-amino-acid chain; its full sequence is Female-specific protein transformer (367 aa).

The tract at residues 86–280 is disordered; that stretch reads ESISSKKIKS…HRHHRSQERS (195 aa). The span at 109–129 shows a compositional bias: polar residues; the sequence is VKQNSPDVTQKFTKKYGSSEN. Positions 130 to 144 are enriched in basic and acidic residues; that stretch reads PDFRRHSSYEKDNYH. A compositionally biased stretch (basic residues) spans 195–223; the sequence is NRRRSSHRSRRGSGSPRSRRYTSRHRRRS. Positions 229–238 are enriched in basic and acidic residues; it reads TSWKHNPEHR. Positions 239–257 are enriched in basic residues; the sequence is TSRRSRTRSPRGNRSRRRS.

Its function is as follows. Sex differentiation protein controlling female somatic sexual differentiation. May act by promoting the formation of a splicing enhancer complex. This Musca domestica (House fly) protein is Female-specific protein transformer.